Consider the following 545-residue polypeptide: La-related protein 6B (545 aa).

Over residues 1 to 10 the composition is skewed to polar residues; the sequence is MADQQTLDSS. Disordered stretches follow at residues 1 to 76, 105 to 187, and 382 to 545; these read MADQ…IPPP, LVPV…DSKT, and HQTK…VQAE. The span at 23-49 shows a compositional bias: low complexity; the sequence is SHSTSSTTSASSSSDPSLLRSLSLSRL. The span at 61-76 shows a compositional bias: pro residues; the sequence is TTPPLPQPPRMIIPPP. Residues 111–126 are compositionally biased toward basic residues; sequence HHPHHRFHQHHHHNRH. A compositionally biased stretch (basic and acidic residues) spans 154-173; the sequence is LVSKKNDRRDHSKRESKNDQ. Polar residues predominate over residues 174–185; that stretch reads VTETGASVSIDS. The 92-residue stretch at 187–278 folds into the HTH La-type RNA-binding domain; the sequence is TGLPEDSIQK…RRISPITESA (92 aa). The region spanning 285 to 383 is the RRM domain; that stretch reads RIIVAENLPE…LKVRLMLKHQ (99 aa). Basic residues predominate over residues 448 to 464; the sequence is GQRKGRNRGRGKGRGRG. Residues 465 to 478 show a composition bias toward low complexity; it reads QPHQNQNQNNNHSH. Positions 479 to 497 are enriched in basic residues; sequence NQNHNHNGRGNHHHHHHHQ. A compositionally biased stretch (polar residues) spans 498-509; that stretch reads VGTQPSNNPMNN. Residues 510–519 show a composition bias toward low complexity; that stretch reads MEQPGMGKQQ.

Its subcellular location is the nucleus. Functionally, transcriptional regulator. The sequence is that of La-related protein 6B (LARP6B) from Arabidopsis thaliana (Mouse-ear cress).